We begin with the raw amino-acid sequence, 367 residues long: Molybdopterin synthase catalytic subunit (367 aa).

Substrate contacts are provided by residues 101 to 102 (HR), K117, and 124 to 126 (KKE). Residues 325-350 (RHFTKREPSSMEAAPPKKSRKKSYSA) are disordered.

Belongs to the MoaE family. MOCS2B subfamily. Heterotetramer; composed of 2 small (Mocs2A) and 2 large (Mocs2B) subunits. Component of the Ada2a-containing (ATAC) complex composed of at least Ada2a, Atac1, Hcf, Ada3, Gcn5, Mocs2B, Charac-14, Atac3, Atac2, NC2beta and wds.

Its subcellular location is the cytoplasm. The protein localises to the nucleus. The catalysed reaction is 2 [molybdopterin-synthase sulfur-carrier protein]-C-terminal-Gly-aminoethanethioate + cyclic pyranopterin phosphate + H2O = molybdopterin + 2 [molybdopterin-synthase sulfur-carrier protein]-C-terminal Gly-Gly + 2 H(+). It participates in cofactor biosynthesis; molybdopterin biosynthesis. Functionally, catalytic subunit of the molybdopterin synthase complex, a complex that catalyzes the conversion of precursor Z into molybdopterin. Acts by mediating the incorporation of 2 sulfur atoms from thiocarboxylated Mocs2A into precursor Z to generate a dithiolene group. Involved during biosynthesis of the molybdenum cofactor. The chain is Molybdopterin synthase catalytic subunit from Drosophila melanogaster (Fruit fly).